The following is a 796-amino-acid chain: Protein translocase subunit SecA 2 (796 aa).

Residues glutamine 84, 102–106 (GEGKT), and aspartate 496 each bind ATP.

The protein belongs to the SecA family. Monomer and homodimer. Part of the essential Sec protein translocation apparatus which comprises SecA, SecYEG and auxiliary proteins SecDF. Other proteins may also be involved.

Its subcellular location is the cell membrane. The protein resides in the cytoplasm. The enzyme catalyses ATP + H2O + cellular proteinSide 1 = ADP + phosphate + cellular proteinSide 2.. Part of the Sec protein translocase complex. Interacts with the SecYEG preprotein conducting channel. Has a central role in coupling the hydrolysis of ATP to the transfer of proteins into and across the cell membrane, serving as an ATP-driven molecular motor driving the stepwise translocation of polypeptide chains across the membrane. This chain is Protein translocase subunit SecA 2, found in Staphylococcus haemolyticus (strain JCSC1435).